A 206-amino-acid polypeptide reads, in one-letter code: 21.9 kDa heat shock protein (206 aa).

Positions 1-29 (MAAVAEREVLGMVAAVAAMVVMMAPPAAA) are cleaved as a signal peptide. Residues 65 to 187 (EPAAVALARC…GREPRVVAID (123 aa)) enclose the sHSP domain. The Cell attachment site motif lies at 94-96 (RGD).

It belongs to the small heat shock protein (HSP20) family. In terms of assembly, may form oligomeric structures.

It is found in the endoplasmic reticulum. The polypeptide is 21.9 kDa heat shock protein (HSP21.9) (Oryza sativa subsp. japonica (Rice)).